Here is an 83-residue protein sequence, read N- to C-terminus: U5-theraphotoxin-Hs1b 2 (83 aa).

A signal peptide spans 1–21; the sequence is MQTSMFLTLTGLVLLFVVCYA. Positions 22–49 are excised as a propeptide; the sequence is SESEEKEFPKELLSSIFAADSDFKEEER. Disulfide bonds link cysteine 51-cysteine 63, cysteine 56-cysteine 68, and cysteine 62-cysteine 75.

The protein belongs to the neurotoxin 10 (Hwtx-1) family. 51 (Hntx-8) subfamily. Hntx-8 sub-subfamily. As to expression, expressed by the venom gland.

The protein localises to the secreted. Agglutinates erythrocytes. This is U5-theraphotoxin-Hs1b 2 from Cyriopagopus schmidti (Chinese bird spider).